Consider the following 449-residue polypeptide: MNPNQKIITIGSICMVIGIVSLMLQIGNMISIWVSHSIQTGNQHQAEPISNTNFLTEKAVASVTLAGNSSLCPISGWAVHSKDNSIRIGSKGDVFVIREPFISCSHLECRTFFLTQGALLNDKHSNGTVKDRSPHRTLMSCPVGEAPSPYNSRFESVAWSASACHDGTSWLTIGISGPDNGAVAVLKYNGIITDTIKSWRNNILRTQESECACVNGSCFTVMTDGPSNGQASYKIFKMEKGKVVKSVELDAPNYHYEECSCYPDAGEITCVCRDNWHGSNRPWVSFNQNLEYQIGYICSGVFGDNPRPNDGTGSCGPVSPNGAYGVKGFSFKYGNGVWIGRTKSTNSRSGFEMIWDPNGWTGTDSSFSVKQDIVAITDWSGYSGSFVQHPELTGLDCIRPCFWVELIRGRPKESTIWTSGSSISFCGVNSDTVGWSWPDGAELPFTIDK.

The Intravirion segment spans residues 1-6 (MNPNQK). Residues 7-27 (IITIGSICMVIGIVSLMLQIG) form a helical membrane-spanning segment. The segment at 11–33 (GSICMVIGIVSLMLQIGNMISIW) is involved in apical transport and lipid raft association. At 28–449 (NMISIWVSHS…GAELPFTIDK (422 aa)) the chain is on the virion surface side. A hypervariable stalk region region spans residues 36–70 (HSIQTGNQHQAEPISNTNFLTEKAVASVTLAGNSS). A glycan (N-linked (GlcNAc...) asparagine; by host) is linked at Asn68. The interval 71-449 (LCPISGWAVH…GAELPFTIDK (379 aa)) is head of neuraminidase. 8 disulfides stabilise this stretch: Cys72–Cys397, Cys104–Cys109, Cys164–Cys211, Cys213–Cys218, Cys259–Cys272, Cys261–Cys270, Cys298–Cys315, and Cys401–Cys426. A substrate-binding site is contributed by Arg98. A glycan (N-linked (GlcNAc...) asparagine; by host) is linked at Asn126. Asp131 serves as the catalytic Proton donor/acceptor. Arg132 provides a ligand contact to substrate. Asn215 carries an N-linked (GlcNAc...) asparagine; by host glycan. A substrate-binding site is contributed by 257–258 (EE). Residue Arg273 participates in substrate binding. Ca(2+) contacts are provided by Asp274, Gly278, and Asp304. Arg348 contacts substrate. The active-site Nucleophile is Tyr382.

It belongs to the glycosyl hydrolase 34 family. In terms of assembly, homotetramer. The cofactor is Ca(2+). Post-translationally, N-glycosylated.

Its subcellular location is the virion membrane. The protein resides in the host apical cell membrane. It carries out the reaction Hydrolysis of alpha-(2-&gt;3)-, alpha-(2-&gt;6)-, alpha-(2-&gt;8)- glycosidic linkages of terminal sialic acid residues in oligosaccharides, glycoproteins, glycolipids, colominic acid and synthetic substrates.. Its activity is regulated as follows. Inhibited by the neuraminidase inhibitors zanamivir (Relenza) and oseltamivir (Tamiflu). These drugs interfere with the release of progeny virus from infected cells and are effective against all influenza strains. Resistance to neuraminidase inhibitors is quite rare. In terms of biological role, catalyzes the removal of terminal sialic acid residues from viral and cellular glycoconjugates. Cleaves off the terminal sialic acids on the glycosylated HA during virus budding to facilitate virus release. Additionally helps virus spread through the circulation by further removing sialic acids from the cell surface. These cleavages prevent self-aggregation and ensure the efficient spread of the progeny virus from cell to cell. Otherwise, infection would be limited to one round of replication. Described as a receptor-destroying enzyme because it cleaves a terminal sialic acid from the cellular receptors. May facilitate viral invasion of the upper airways by cleaving the sialic acid moieties on the mucin of the airway epithelial cells. Likely to plays a role in the budding process through its association with lipid rafts during intracellular transport. May additionally display a raft-association independent effect on budding. Plays a role in the determination of host range restriction on replication and virulence. Sialidase activity in late endosome/lysosome traffic seems to enhance virus replication. In Influenza A virus (strain A/Chicken/Hong Kong/96.1/2002 H5N1 genotype Y), this protein is Neuraminidase.